The primary structure comprises 452 residues: MHQRALLFSALAVAANAQQVGTQTPETHPPLTWQKCTAAGSCSQQSGSVVIDANWRWLHSTKDTTNCYTGNTWNTELCPDNESCAQNCALDGADYAGTYGVTTSGSELKLSFVTGANVGSRLYLMQDDETYQHFNLLNHEFTFDVDVSNLPCGLNGALYFVAMDADGGMSKYPSNKAGAKYGTGYCDSQCPRDLKFINGMANVEGWEPSSSDKNAGVGGHGSCCPEMDIWEANSISTAVTPHPCDDVSQTMCSGDACGGTYSESRYAGTCDPDGCDFNPFRMGNESFYGPGKIVDTKSKMTVVTQFITADGTDSGALSEIKRLYVQNGKVIANSVSNVAGVSGNSITSDFCTAQKKAFGDEDIFAKHGGLSGMGKALSEMVLIMSIWDDHHSSMMWLDSTYPTDADPSKPGVARGTCEHGAGDPENVESQHPDASVTFSNIKFGPIGSTYEG.

The signal sequence occupies residues 1–17 (MHQRALLFSALAVAANA). N81 carries an N-linked (GlcNAc...) asparagine glycan. The Nucleophile role is filled by E226. The Proton donor role is filled by E231. N284 is a glycosylation site (N-linked (GlcNAc...) asparagine). The tract at residues 405–431 (ADPSKPGVARGTCEHGAGDPENVESQH) is disordered.

This sequence belongs to the glycosyl hydrolase 7 (cellulase C) family.

The protein resides in the secreted. It catalyses the reaction Hydrolysis of (1-&gt;4)-beta-D-glucosidic linkages in cellulose and cellotetraose, releasing cellobiose from the non-reducing ends of the chains.. Its function is as follows. The biological conversion of cellulose to glucose generally requires three types of hydrolytic enzymes: (1) Endoglucanases which cut internal beta-1,4-glucosidic bonds; (2) Exocellobiohydrolases that cut the disaccharide cellobiose from the non-reducing end of the cellulose polymer chain; (3) Beta-1,4-glucosidases which hydrolyze the cellobiose and other short cello-oligosaccharides to glucose. This is Probable 1,4-beta-D-glucan cellobiohydrolase A (cbhA) from Aspergillus fumigatus (strain CBS 144.89 / FGSC A1163 / CEA10) (Neosartorya fumigata).